Here is a 463-residue protein sequence, read N- to C-terminus: Ribosomal protein uS12 methylthiotransferase RimO (463 aa).

Residues 11–126 form the MTTase N-terminal domain; that stretch reads PKIGFVSLGC…VMEVVHTHCP (116 aa). Residues C20, C56, C85, C161, C165, and C168 each coordinate [4Fe-4S] cluster. The Radical SAM core domain maps to 147–388; sequence LTPRHYAYLK…MAVAEEVSTA (242 aa). Residues 391 to 463 form the TRAM domain; it reads QRRVGQTMQV…QGHDLVGVPV (73 aa).

This sequence belongs to the methylthiotransferase family. RimO subfamily. It depends on [4Fe-4S] cluster as a cofactor.

It localises to the cytoplasm. The catalysed reaction is L-aspartate(89)-[ribosomal protein uS12]-hydrogen + (sulfur carrier)-SH + AH2 + 2 S-adenosyl-L-methionine = 3-methylsulfanyl-L-aspartate(89)-[ribosomal protein uS12]-hydrogen + (sulfur carrier)-H + 5'-deoxyadenosine + L-methionine + A + S-adenosyl-L-homocysteine + 2 H(+). In terms of biological role, catalyzes the methylthiolation of an aspartic acid residue of ribosomal protein uS12. This Acidovorax sp. (strain JS42) protein is Ribosomal protein uS12 methylthiotransferase RimO.